We begin with the raw amino-acid sequence, 224 residues long: Mammalian ependymin-related protein 1 (224 aa).

Positions 1–37 (MPGRAPLHTVPGALGPWLLGCLWAWTLCGLCSLGAVG) are cleaved as a signal peptide. 3 disulfide bridges follow: Cys42–Cys172, Cys88–Cys222, and Cys113–Cys210. Asn130 and Asn182 each carry an N-linked (GlcNAc...) asparagine glycan.

Belongs to the ependymin family. Homodimer. In terms of processing, N-glycosylated; the glycan contains mannose-6-phosphate moieties.

The protein localises to the lysosome lumen. The protein resides in the secreted. Its function is as follows. Binds anionic lipids and gangliosides at acidic pH. The chain is Mammalian ependymin-related protein 1 (EPDR1) from Macaca fascicularis (Crab-eating macaque).